The following is an 831-amino-acid chain: Replication restart protein PriA (831 aa).

The region spanning 304 to 471 (VLPLQGYHQV…HRHQNDPQRH (168 aa)) is the Helicase ATP-binding domain. Residue 317–324 (GVTGSGKT) coordinates ATP. Positions 413-416 (DEEH) match the DEAH box motif. The Zn(2+) site is built by cysteine 537, cysteine 540, cysteine 546, cysteine 549, cysteine 568, cysteine 571, cysteine 581, and cysteine 584. In terms of domain architecture, Helicase C-terminal spans 575 to 735 (EIQPKVCPEC…ELPQREMLNY (161 aa)).

The protein belongs to the helicase family. PriA subfamily. Component of the replication restart primosome. Requires Zn(2+) as cofactor.

The catalysed reaction is Couples ATP hydrolysis with the unwinding of duplex DNA by translocating in the 3'-5' direction.. The enzyme catalyses ATP + H2O = ADP + phosphate + H(+). In terms of biological role, initiates the restart of stalled replication forks, which reloads the replicative helicase on sites other than the origin of replication. Recognizes and binds to abandoned replication forks and remodels them to uncover a helicase loading site. Promotes assembly of the primosome at these replication forks. The sequence is that of Replication restart protein PriA from Synechocystis sp. (strain ATCC 27184 / PCC 6803 / Kazusa).